Reading from the N-terminus, the 727-residue chain is Malate synthase G (727 aa).

Acetyl-CoA-binding positions include Val-117, Arg-124–Tyr-125, Ser-275, and Arg-312. Catalysis depends on Arg-339, which acts as the Proton acceptor. Glyoxylate-binding positions include Arg-339, Glu-431, and Gly-456–Asp-459. Residues Glu-431 and Asp-459 each contribute to the Mg(2+) site. Pro-540 is a binding site for acetyl-CoA. Residue Cys-616 is modified to Cysteine sulfenic acid (-SOH). Asp-630 acts as the Proton donor in catalysis.

This sequence belongs to the malate synthase family. GlcB subfamily. In terms of assembly, monomer. Mg(2+) serves as cofactor.

It localises to the cytoplasm. The catalysed reaction is glyoxylate + acetyl-CoA + H2O = (S)-malate + CoA + H(+). Its pathway is carbohydrate metabolism; glyoxylate cycle; (S)-malate from isocitrate: step 2/2. Its function is as follows. Involved in the glycolate utilization. Catalyzes the condensation and subsequent hydrolysis of acetyl-coenzyme A (acetyl-CoA) and glyoxylate to form malate and CoA. This chain is Malate synthase G, found in Halalkalibacterium halodurans (strain ATCC BAA-125 / DSM 18197 / FERM 7344 / JCM 9153 / C-125) (Bacillus halodurans).